A 371-amino-acid polypeptide reads, in one-letter code: Queuine tRNA-ribosyltransferase (371 aa).

The active-site Proton acceptor is D93. Substrate contacts are provided by residues 93–97 (DSGGF), D147, Q191, and G218. The interval 249-255 (GVGTVVD) is RNA binding. The Nucleophile role is filled by D268. The segment at 273–277 (TRNAR) is RNA binding; important for wobble base 34 recognition. Zn(2+) is bound by residues C306, C308, C311, and H337.

This sequence belongs to the queuine tRNA-ribosyltransferase family. As to quaternary structure, homodimer. Within each dimer, one monomer is responsible for RNA recognition and catalysis, while the other monomer binds to the replacement base PreQ1. Zn(2+) is required as a cofactor.

The catalysed reaction is 7-aminomethyl-7-carbaguanine + guanosine(34) in tRNA = 7-aminomethyl-7-carbaguanosine(34) in tRNA + guanine. Its pathway is tRNA modification; tRNA-queuosine biosynthesis. Functionally, catalyzes the base-exchange of a guanine (G) residue with the queuine precursor 7-aminomethyl-7-deazaguanine (PreQ1) at position 34 (anticodon wobble position) in tRNAs with GU(N) anticodons (tRNA-Asp, -Asn, -His and -Tyr). Catalysis occurs through a double-displacement mechanism. The nucleophile active site attacks the C1' of nucleotide 34 to detach the guanine base from the RNA, forming a covalent enzyme-RNA intermediate. The proton acceptor active site deprotonates the incoming PreQ1, allowing a nucleophilic attack on the C1' of the ribose to form the product. After dissociation, two additional enzymatic reactions on the tRNA convert PreQ1 to queuine (Q), resulting in the hypermodified nucleoside queuosine (7-(((4,5-cis-dihydroxy-2-cyclopenten-1-yl)amino)methyl)-7-deazaguanosine). The protein is Queuine tRNA-ribosyltransferase of Leptospira biflexa serovar Patoc (strain Patoc 1 / Ames).